Consider the following 427-residue polypeptide: Adenylosuccinate synthetase (427 aa).

GTP contacts are provided by residues 12-18 (GDEGKGK) and 40-42 (GHT). Asp-13 acts as the Proton acceptor in catalysis. 2 residues coordinate Mg(2+): Asp-13 and Gly-40. Residues 13–16 (DEGK), 38–41 (NAGH), Thr-130, Arg-144, Gln-224, Thr-239, and Arg-303 contribute to the IMP site. The active-site Proton donor is the His-41. 299–305 (SVTGRPR) is a substrate binding site. GTP-binding positions include Arg-305, 331-333 (KLD), and 411-413 (SVG).

It belongs to the adenylosuccinate synthetase family. In terms of assembly, homodimer. It depends on Mg(2+) as a cofactor.

It is found in the cytoplasm. It catalyses the reaction IMP + L-aspartate + GTP = N(6)-(1,2-dicarboxyethyl)-AMP + GDP + phosphate + 2 H(+). It functions in the pathway purine metabolism; AMP biosynthesis via de novo pathway; AMP from IMP: step 1/2. In terms of biological role, plays an important role in the de novo pathway of purine nucleotide biosynthesis. Catalyzes the first committed step in the biosynthesis of AMP from IMP. The protein is Adenylosuccinate synthetase of Sorangium cellulosum (strain So ce56) (Polyangium cellulosum (strain So ce56)).